A 116-amino-acid polypeptide reads, in one-letter code: Large ribosomal subunit protein bL17 (116 aa).

It belongs to the bacterial ribosomal protein bL17 family. Part of the 50S ribosomal subunit. Contacts protein L32.

The protein is Large ribosomal subunit protein bL17 of Sulfurovum sp. (strain NBC37-1).